The sequence spans 130 residues: Small ribosomal subunit protein uS8 (130 aa).

Belongs to the universal ribosomal protein uS8 family. As to quaternary structure, part of the 30S ribosomal subunit. Contacts proteins S5 and S12.

Functionally, one of the primary rRNA binding proteins, it binds directly to 16S rRNA central domain where it helps coordinate assembly of the platform of the 30S subunit. This chain is Small ribosomal subunit protein uS8, found in Pseudomonas aeruginosa (strain UCBPP-PA14).